The sequence spans 258 residues: Imidazole glycerol phosphate synthase subunit HisF (258 aa).

Residues D11 and D130 contribute to the active site.

This sequence belongs to the HisA/HisF family. As to quaternary structure, heterodimer of HisH and HisF.

Its subcellular location is the cytoplasm. The catalysed reaction is 5-[(5-phospho-1-deoxy-D-ribulos-1-ylimino)methylamino]-1-(5-phospho-beta-D-ribosyl)imidazole-4-carboxamide + L-glutamine = D-erythro-1-(imidazol-4-yl)glycerol 3-phosphate + 5-amino-1-(5-phospho-beta-D-ribosyl)imidazole-4-carboxamide + L-glutamate + H(+). Its pathway is amino-acid biosynthesis; L-histidine biosynthesis; L-histidine from 5-phospho-alpha-D-ribose 1-diphosphate: step 5/9. IGPS catalyzes the conversion of PRFAR and glutamine to IGP, AICAR and glutamate. The HisF subunit catalyzes the cyclization activity that produces IGP and AICAR from PRFAR using the ammonia provided by the HisH subunit. The sequence is that of Imidazole glycerol phosphate synthase subunit HisF from Xanthomonas oryzae pv. oryzae (strain MAFF 311018).